Reading from the N-terminus, the 278-residue chain is HTH-type transcriptional activator RhaS (278 aa).

An HTH araC/xylS-type domain is found at 174–272 (NLLLAWLEDH…NWSPRDIRQG (99 aa)). DNA-binding regions (H-T-H motif) lie at residues 191 to 212 (DAVA…KQQT) and 239 to 262 (VTDI…RREF).

In terms of assembly, binds DNA as a dimer.

It localises to the cytoplasm. Its function is as follows. Activates expression of the rhaBAD and rhaT operons. The sequence is that of HTH-type transcriptional activator RhaS from Shigella dysenteriae serotype 1 (strain Sd197).